Reading from the N-terminus, the 450-residue chain is Protein phosphatase 1F (450 aa).

Residues 152-409 form the PPM-type phosphatase domain; sequence LVSIHAIRNT…DNITVMVVFL (258 aa). Positions 194, 195, 356, and 400 each coordinate Mn(2+). The tract at residues 420–450 is disordered; that stretch reads GQGAGGAQADVGSQDLSTGLSELEINTSQRS. Polar residues predominate over residues 433–450; it reads QDLSTGLSELEINTSQRS. Residue Ser-450 is modified to Phosphoserine.

It belongs to the PP2C family. As to quaternary structure, associates with FEM1B. Requires Mg(2+) as cofactor. Mn(2+) is required as a cofactor.

It carries out the reaction O-phospho-L-seryl-[protein] + H2O = L-seryl-[protein] + phosphate. The enzyme catalyses O-phospho-L-threonyl-[protein] + H2O = L-threonyl-[protein] + phosphate. In terms of biological role, dephosphorylates and concomitantly deactivates CaM-kinase II activated upon autophosphorylation, and CaM-kinases IV and I activated upon phosphorylation by CaM-kinase kinase. Promotes apoptosis. This Rattus norvegicus (Rat) protein is Protein phosphatase 1F (Ppm1f).